The chain runs to 34 residues: Colipase (34 aa).

2 cysteine pairs are disulfide-bonded: cysteine 12/cysteine 23 and cysteine 18/cysteine 34.

It belongs to the colipase family. As to quaternary structure, forms a 1:1 stoichiometric complex with pancreatic lipase. As to expression, expressed by the pancreas.

It is found in the secreted. Functionally, colipase is a cofactor of pancreatic lipase. It allows the lipase to anchor itself to the lipid-water interface. Without colipase the enzyme is washed off by bile salts, which have an inhibitory effect on the lipase. The protein is Colipase (CLPS) of Gallus gallus (Chicken).